Here is a 397-residue protein sequence, read N- to C-terminus: Riboflavin biosynthesis protein RibBA (397 aa).

Residues 1 to 199 are DHBP synthase; the sequence is MFHRIEEALE…IEDLIAYRRH (199 aa). Residues 26-27, D31, 138-142, and E162 contribute to the D-ribulose 5-phosphate site; these read RE and RAGHT. Position 27 (E27) interacts with Mg(2+). H141 lines the Mg(2+) pocket. The GTP cyclohydrolase II stretch occupies residues 200 to 397; it reads HETLVTREVE…VNKLGHLLNL (198 aa). 250–254 lines the GTP pocket; that stretch reads RVHSE. Zn(2+)-binding residues include C255, C266, and C268. Residues Q271, 293–295, and T315 contribute to the GTP site; that span reads EGR. Catalysis depends on D327, which acts as the Proton acceptor; for GTP cyclohydrolase activity. The active-site Nucleophile; for GTP cyclohydrolase activity is the R329. 2 residues coordinate GTP: T350 and K355.

This sequence in the N-terminal section; belongs to the DHBP synthase family. The protein in the C-terminal section; belongs to the GTP cyclohydrolase II family. It depends on Mg(2+) as a cofactor. Mn(2+) serves as cofactor. Zn(2+) is required as a cofactor.

It carries out the reaction D-ribulose 5-phosphate = (2S)-2-hydroxy-3-oxobutyl phosphate + formate + H(+). The enzyme catalyses GTP + 4 H2O = 2,5-diamino-6-hydroxy-4-(5-phosphoribosylamino)-pyrimidine + formate + 2 phosphate + 3 H(+). The protein operates within cofactor biosynthesis; riboflavin biosynthesis; 2-hydroxy-3-oxobutyl phosphate from D-ribulose 5-phosphate: step 1/1. It participates in cofactor biosynthesis; riboflavin biosynthesis; 5-amino-6-(D-ribitylamino)uracil from GTP: step 1/4. Its function is as follows. Catalyzes the conversion of D-ribulose 5-phosphate to formate and 3,4-dihydroxy-2-butanone 4-phosphate. In terms of biological role, catalyzes the conversion of GTP to 2,5-diamino-6-ribosylamino-4(3H)-pyrimidinone 5'-phosphate (DARP), formate and pyrophosphate. The sequence is that of Riboflavin biosynthesis protein RibBA from Bacillus cereus (strain B4264).